The primary structure comprises 291 residues: Nucleotide-binding protein EUBREC_0697 (291 aa).

8–15 (GMSGAGKS) provides a ligand contact to ATP. Residue 59 to 62 (DVRN) coordinates GTP.

The protein belongs to the RapZ-like family.

In terms of biological role, displays ATPase and GTPase activities. The protein is Nucleotide-binding protein EUBREC_0697 of Agathobacter rectalis (strain ATCC 33656 / DSM 3377 / JCM 17463 / KCTC 5835 / VPI 0990) (Eubacterium rectale).